A 251-amino-acid polypeptide reads, in one-letter code: 5'-nucleotidase SurE (251 aa).

Residues aspartate 8, aspartate 9, serine 39, and asparagine 95 each contribute to the a divalent metal cation site.

This sequence belongs to the SurE nucleotidase family. Requires a divalent metal cation as cofactor.

The protein resides in the cytoplasm. The catalysed reaction is a ribonucleoside 5'-phosphate + H2O = a ribonucleoside + phosphate. In terms of biological role, nucleotidase that shows phosphatase activity on nucleoside 5'-monophosphates. This is 5'-nucleotidase SurE from Clostridium botulinum (strain Eklund 17B / Type B).